Here is a 336-residue protein sequence, read N- to C-terminus: Quinolinate synthase (336 aa).

The iminosuccinate site is built by His-25 and Ser-42. Residue Cys-86 coordinates [4Fe-4S] cluster. Iminosuccinate contacts are provided by residues 117–119 (YIN) and Ser-138. Residue Cys-198 participates in [4Fe-4S] cluster binding. Iminosuccinate contacts are provided by residues 224 to 226 (HPE) and Thr-241. Cys-288 is a binding site for [4Fe-4S] cluster.

It belongs to the quinolinate synthase family. Type 3 subfamily. [4Fe-4S] cluster is required as a cofactor.

Its subcellular location is the cytoplasm. It carries out the reaction iminosuccinate + dihydroxyacetone phosphate = quinolinate + phosphate + 2 H2O + H(+). It functions in the pathway cofactor biosynthesis; NAD(+) biosynthesis; quinolinate from iminoaspartate: step 1/1. Catalyzes the condensation of iminoaspartate with dihydroxyacetone phosphate to form quinolinate. The sequence is that of Quinolinate synthase from Helicobacter pylori (strain ATCC 700392 / 26695) (Campylobacter pylori).